Consider the following 432-residue polypeptide: Enolase (432 aa).

A (2R)-2-phosphoglycerate-binding site is contributed by glutamine 167. The active-site Proton donor is glutamate 209. Mg(2+) is bound by residues aspartate 246, glutamate 289, and aspartate 316. The (2R)-2-phosphoglycerate site is built by lysine 341, arginine 370, serine 371, and lysine 392. Lysine 341 (proton acceptor) is an active-site residue.

It belongs to the enolase family. The cofactor is Mg(2+).

The protein resides in the cytoplasm. The protein localises to the secreted. It is found in the cell surface. It carries out the reaction (2R)-2-phosphoglycerate = phosphoenolpyruvate + H2O. It participates in carbohydrate degradation; glycolysis; pyruvate from D-glyceraldehyde 3-phosphate: step 4/5. Functionally, catalyzes the reversible conversion of 2-phosphoglycerate (2-PG) into phosphoenolpyruvate (PEP). It is essential for the degradation of carbohydrates via glycolysis. The protein is Enolase of Thermotoga neapolitana (strain ATCC 49049 / DSM 4359 / NBRC 107923 / NS-E).